A 454-amino-acid chain; its full sequence is Probable N-octanoylanthranilate hydrolase AqdA2 (454 aa).

Catalysis depends on S185, which acts as the Acyl-ester intermediate. Active-site charge relay system residues include E306 and H379.

This sequence belongs to the type-B carboxylesterase/lipase family.

The enzyme catalyses N-octanoylanthranilate + H2O = anthranilate + octanoate + H(+). In terms of biological role, involved in the degradation of the Pseudomonas aeruginosa quorum sensing signal molecules HHQ (2-heptyl-4-quinolone) and PQS (2-heptyl-3-hydroxy-4-quinolone) to anthranilic acid. Probably catalyzes the hydrolysis of N-octanoylanthranilic acid to anthranilic acid. This Rhodococcus erythropolis (Arthrobacter picolinophilus) protein is Probable N-octanoylanthranilate hydrolase AqdA2.